Here is a 428-residue protein sequence, read N- to C-terminus: Serine--tRNA ligase (428 aa).

231–233 serves as a coordination point for L-serine; that stretch reads TAE. Residues 262-264 and V278 each bind ATP; that span reads RRE. E285 contacts L-serine. 349–352 serves as a coordination point for ATP; the sequence is EVSS. Position 384 (S384) interacts with L-serine.

This sequence belongs to the class-II aminoacyl-tRNA synthetase family. Type-1 seryl-tRNA synthetase subfamily. In terms of assembly, homodimer. The tRNA molecule binds across the dimer.

The protein resides in the cytoplasm. It carries out the reaction tRNA(Ser) + L-serine + ATP = L-seryl-tRNA(Ser) + AMP + diphosphate + H(+). The catalysed reaction is tRNA(Sec) + L-serine + ATP = L-seryl-tRNA(Sec) + AMP + diphosphate + H(+). It participates in aminoacyl-tRNA biosynthesis; selenocysteinyl-tRNA(Sec) biosynthesis; L-seryl-tRNA(Sec) from L-serine and tRNA(Sec): step 1/1. Its function is as follows. Catalyzes the attachment of serine to tRNA(Ser). Is also able to aminoacylate tRNA(Sec) with serine, to form the misacylated tRNA L-seryl-tRNA(Sec), which will be further converted into selenocysteinyl-tRNA(Sec). The chain is Serine--tRNA ligase from Chlamydia trachomatis serovar L2 (strain ATCC VR-902B / DSM 19102 / 434/Bu).